The primary structure comprises 329 residues: uncharacterized protein (329 aa).

The disordered stretch occupies residues 284 to 303; that stretch reads SGGGHSEAGGLNAPYDKSKS.

This is an uncharacterized protein from Methanocaldococcus jannaschii (strain ATCC 43067 / DSM 2661 / JAL-1 / JCM 10045 / NBRC 100440) (Methanococcus jannaschii).